The chain runs to 630 residues: Polyphenol oxidase A, chloroplastic (630 aa).

Residues 1–25 (MASLCSNSSSTSLKTPFTSSTTCLS) are disordered. Residues 1–87 (MASLCSNSSS…ANAIPLAASA (87 aa)) constitute a chloroplast transit peptide. Disulfide bonds link Cys-98–Cys-114 and Cys-113–Cys-181. Cu cation-binding residues include His-180, His-198, His-207, His-328, His-332, and His-370. The segment at residues 184–198 (CNGGYSIDGKVLQVH) is a cross-link (2'-(S-cysteinyl)-histidine (Cys-His)).

This sequence belongs to the tyrosinase family. The cofactor is Cu(2+).

It is found in the plastid. The protein localises to the chloroplast thylakoid lumen. The enzyme catalyses 2 catechol + O2 = 2 1,2-benzoquinone + 2 H2O. Catalyzes the oxidation of mono- and o-diphenols to o-diquinones. This is Polyphenol oxidase A, chloroplastic from Solanum lycopersicum (Tomato).